The sequence spans 161 residues: Deoxyuridine 5'-triphosphate nucleotidohydrolase (161 aa).

Substrate-binding positions include R80–G82, N93, T97–D99, and K107.

This sequence belongs to the dUTPase family. The cofactor is Mg(2+).

The enzyme catalyses dUTP + H2O = dUMP + diphosphate + H(+). It participates in pyrimidine metabolism; dUMP biosynthesis; dUMP from dCTP (dUTP route): step 2/2. In terms of biological role, this enzyme is involved in nucleotide metabolism: it produces dUMP, the immediate precursor of thymidine nucleotides and it decreases the intracellular concentration of dUTP so that uracil cannot be incorporated into DNA. This chain is Deoxyuridine 5'-triphosphate nucleotidohydrolase, found in Mesorhizobium japonicum (strain LMG 29417 / CECT 9101 / MAFF 303099) (Mesorhizobium loti (strain MAFF 303099)).